A 157-amino-acid polypeptide reads, in one-letter code: Transcriptional repressor NrdR (157 aa).

The span at 1-11 (MQCPSCQNTDS) shows a compositional bias: polar residues. The segment at 1–21 (MQCPSCQNTDSRVLESRSADT) is disordered. A zinc finger lies at 3-34 (CPSCQNTDSRVLESRSADTGKSVRRRRECLNC). The region spanning 49 to 139 (ITVIKRSESK…VYRQFNGIND (91 aa)) is the ATP-cone domain.

It belongs to the NrdR family. Zn(2+) is required as a cofactor.

Negatively regulates transcription of bacterial ribonucleotide reductase nrd genes and operons by binding to NrdR-boxes. The sequence is that of Transcriptional repressor NrdR from Prochlorococcus marinus (strain MIT 9211).